The following is a 199-amino-acid chain: V-type ATP synthase subunit E (199 aa).

The protein belongs to the V-ATPase E subunit family.

Functionally, produces ATP from ADP in the presence of a proton gradient across the membrane. This Clostridium botulinum (strain Hall / ATCC 3502 / NCTC 13319 / Type A) protein is V-type ATP synthase subunit E.